The sequence spans 247 residues: Uridylate kinase (247 aa).

An ATP-binding site is contributed by 14 to 17 (KLSG). The tract at residues 22-27 (GERGVG) is involved in allosteric activation by GTP. Glycine 56 serves as a coordination point for UMP. The ATP site is built by glycine 57 and arginine 61. UMP contacts are provided by residues aspartate 76 and 137–144 (IGSPYFST). Positions 165, 171, and 174 each coordinate ATP.

Belongs to the UMP kinase family. In terms of assembly, homohexamer.

It is found in the cytoplasm. The enzyme catalyses UMP + ATP = UDP + ADP. It participates in pyrimidine metabolism; CTP biosynthesis via de novo pathway; UDP from UMP (UMPK route): step 1/1. Its activity is regulated as follows. Allosterically activated by GTP. Inhibited by UTP, 5-bromo-UTP and 5-iodo-UTP. Functionally, catalyzes the reversible phosphorylation of UMP to UDP, with ATP as the most efficient phosphate donor. The polypeptide is Uridylate kinase (pyrH) (Streptococcus pneumoniae serotype 4 (strain ATCC BAA-334 / TIGR4)).